The chain runs to 235 residues: Eukaryotic translation initiation factor 4E-1 (235 aa).

A disordered region spans residues 1–36 (MVVEETIKATSTEDLSNTIANQNPRGRGGDEDEELE). Residues 8-24 (KATSTEDLSNTIANQNP) are compositionally biased toward polar residues. EIF4G-binding stretches follow at residues 60-63 (HPLE) and 70-106 (FDNP…NNIH). MRNA is bound by residues 78–83 (KQATWG), K110, and 128–129 (WE). The cysteines at positions 133 and 171 are disulfide-linked. The EIF4G-binding stretch occupies residues 154 to 163 (YTLLAMIGEQ). MRNA-binding positions include 178–183 (RSGQDK) and 223–227 (KKFDR).

Belongs to the eukaryotic initiation factor 4E family. As to quaternary structure, EIF4F is a multi-subunit complex, the composition of which varies with external and internal environmental conditions. It is composed of at least EIF4A, EIF4E and EIF4G. EIF4E is also known to interact with other partners. In higher plants two isoforms of EIF4F have been identified, named isoform EIF4F and isoform EIF(iso)4F. Isoform EIF4F has subunits p220 and p26, whereas isoform EIF(iso)4F has subunits p82 and p28. In terms of assembly, (Microbial infection) Interacts with potyvirus viral genome-linked protein (VPg); this interaction is possible in susceptible hosts but impaired in resistant plants. In terms of processing, according to the redox status, the Cys-133-Cys-171 disulfide bridge may have a role in regulating protein function by affecting its ability to bind capped mRNA.

The protein localises to the nucleus. The protein resides in the cytoplasm. Its function is as follows. Component of the protein complex eIF4F, which is involved in the recognition of the mRNA cap, ATP-dependent unwinding of 5'-terminal secondary structure and recruitment of mRNA to the ribosome. Recognizes and binds the 7-methylguanosine-containing mRNA cap during an early step in the initiation of protein synthesis and facilitates ribosome binding by inducing the unwinding of the mRNAs secondary structures. Key component of recessive resistance to potyviruses. In terms of biological role, (Microbial infection) Susceptibility host factor required for viral infection by recruiting viral RNAs to the host ribosomal complex via an interaction with viral genome-linked protein (VPg). The sequence is that of Eukaryotic translation initiation factor 4E-1 from Citrullus lanatus (Watermelon).